We begin with the raw amino-acid sequence, 240 residues long: tRNA (guanine-N(1)-)-methyltransferase (240 aa).

Residues Gly110 and 129–134 (LGDFVL) each bind S-adenosyl-L-methionine.

The protein belongs to the RNA methyltransferase TrmD family. Homodimer.

Its subcellular location is the cytoplasm. It carries out the reaction guanosine(37) in tRNA + S-adenosyl-L-methionine = N(1)-methylguanosine(37) in tRNA + S-adenosyl-L-homocysteine + H(+). Specifically methylates guanosine-37 in various tRNAs. The protein is tRNA (guanine-N(1)-)-methyltransferase of Clostridium botulinum (strain 657 / Type Ba4).